The sequence spans 160 residues: Sodium/proline symporter (160 aa).

Transmembrane regions (helical) follow at residues 6-26 and 68-88; these read PMLVTFIVYIFGMVLIGFIAW and IFISGISESWIAIGLTLGAWI.

It belongs to the sodium:solute symporter (SSF) (TC 2.A.21) family.

It is found in the cell inner membrane. The catalysed reaction is L-proline(in) + Na(+)(in) = L-proline(out) + Na(+)(out). Its function is as follows. Catalyzes the sodium-dependent uptake of extracellular L-proline. This is Sodium/proline symporter from Klebsiella oxytoca.